Consider the following 1042-residue polypeptide: Isoleucine--tRNA ligase (1042 aa).

The 'HIGH' region motif lies at 48-58 (PFATGLPHFGH). The 'KMSKS' region motif lies at 594 to 598 (KMSKS). Position 597 (lysine 597) interacts with ATP.

It belongs to the class-I aminoacyl-tRNA synthetase family. IleS type 2 subfamily. As to quaternary structure, monomer. Zn(2+) is required as a cofactor.

Its subcellular location is the cytoplasm. It carries out the reaction tRNA(Ile) + L-isoleucine + ATP = L-isoleucyl-tRNA(Ile) + AMP + diphosphate. Functionally, catalyzes the attachment of isoleucine to tRNA(Ile). As IleRS can inadvertently accommodate and process structurally similar amino acids such as valine, to avoid such errors it has two additional distinct tRNA(Ile)-dependent editing activities. One activity is designated as 'pretransfer' editing and involves the hydrolysis of activated Val-AMP. The other activity is designated 'posttransfer' editing and involves deacylation of mischarged Val-tRNA(Ile). This is Isoleucine--tRNA ligase from Borreliella afzelii (strain PKo) (Borrelia afzelii).